Reading from the N-terminus, the 286-residue chain is Lipoyl synthase (286 aa).

Positions 34, 39, 45, 60, 64, 67, and 271 each coordinate [4Fe-4S] cluster. The Radical SAM core domain occupies 46–260 (WESGTATFMI…EESAYSIGFS (215 aa)).

The protein belongs to the radical SAM superfamily. Lipoyl synthase family. [4Fe-4S] cluster serves as cofactor.

The protein resides in the cytoplasm. It carries out the reaction [[Fe-S] cluster scaffold protein carrying a second [4Fe-4S](2+) cluster] + N(6)-octanoyl-L-lysyl-[protein] + 2 oxidized [2Fe-2S]-[ferredoxin] + 2 S-adenosyl-L-methionine + 4 H(+) = [[Fe-S] cluster scaffold protein] + N(6)-[(R)-dihydrolipoyl]-L-lysyl-[protein] + 4 Fe(3+) + 2 hydrogen sulfide + 2 5'-deoxyadenosine + 2 L-methionine + 2 reduced [2Fe-2S]-[ferredoxin]. It participates in protein modification; protein lipoylation via endogenous pathway; protein N(6)-(lipoyl)lysine from octanoyl-[acyl-carrier-protein]: step 2/2. Its function is as follows. Catalyzes the radical-mediated insertion of two sulfur atoms into the C-6 and C-8 positions of the octanoyl moiety bound to the lipoyl domains of lipoate-dependent enzymes, thereby converting the octanoylated domains into lipoylated derivatives. This chain is Lipoyl synthase, found in Picrophilus torridus (strain ATCC 700027 / DSM 9790 / JCM 10055 / NBRC 100828 / KAW 2/3).